The sequence spans 285 residues: Bifunctional protein FolD (285 aa).

NADP(+)-binding positions include 165–167 (GRS) and serine 190.

The protein belongs to the tetrahydrofolate dehydrogenase/cyclohydrolase family. Homodimer.

It catalyses the reaction (6R)-5,10-methylene-5,6,7,8-tetrahydrofolate + NADP(+) = (6R)-5,10-methenyltetrahydrofolate + NADPH. The enzyme catalyses (6R)-5,10-methenyltetrahydrofolate + H2O = (6R)-10-formyltetrahydrofolate + H(+). It participates in one-carbon metabolism; tetrahydrofolate interconversion. Functionally, catalyzes the oxidation of 5,10-methylenetetrahydrofolate to 5,10-methenyltetrahydrofolate and then the hydrolysis of 5,10-methenyltetrahydrofolate to 10-formyltetrahydrofolate. The chain is Bifunctional protein FolD from Burkholderia pseudomallei (strain 1710b).